The chain runs to 316 residues: Ribosomal protein L11 methyltransferase (316 aa).

S-adenosyl-L-methionine-binding residues include threonine 163, glycine 184, aspartate 206, and asparagine 249.

It belongs to the methyltransferase superfamily. PrmA family.

The protein localises to the cytoplasm. The catalysed reaction is L-lysyl-[protein] + 3 S-adenosyl-L-methionine = N(6),N(6),N(6)-trimethyl-L-lysyl-[protein] + 3 S-adenosyl-L-homocysteine + 3 H(+). Functionally, methylates ribosomal protein L11. This is Ribosomal protein L11 methyltransferase from Pediococcus pentosaceus (strain ATCC 25745 / CCUG 21536 / LMG 10740 / 183-1w).